The primary structure comprises 146 residues: MTFKHIVRIADTDLDGNKSLMFALTGIKGIGLRAARCIVNELGVDGRAKLGELDDETIEKVKKFVEEEIESLPSWLLNRRKDPYSGQDLHLLSKDVDFARMLDIERLIKMKAYRGVRHARGKKVRGQRTRSTGRKGRTVGVVRRKR.

Residues 119–146 (ARGKKVRGQRTRSTGRKGRTVGVVRRKR) are disordered.

Belongs to the universal ribosomal protein uS13 family. Part of the 30S ribosomal subunit. Forms a loose heterodimer with protein S19. Forms two bridges to the 50S subunit in the 70S ribosome.

In terms of biological role, located at the top of the head of the 30S subunit, it contacts several helices of the 16S rRNA. In the 70S ribosome it contacts the 23S rRNA (bridge B1a) and protein L5 of the 50S subunit (bridge B1b), connecting the 2 subunits; these bridges are implicated in subunit movement. The polypeptide is Small ribosomal subunit protein uS13 (Archaeoglobus fulgidus (strain ATCC 49558 / DSM 4304 / JCM 9628 / NBRC 100126 / VC-16)).